A 395-amino-acid polypeptide reads, in one-letter code: Phosphonoacetaldehyde reductase (395 aa).

Residues Asp199, His268, and His282 each contribute to the Fe cation site.

The protein belongs to the iron-containing alcohol dehydrogenase family. It depends on Fe cation as a cofactor.

The enzyme catalyses 2-hydroxyethylphosphonate + NAD(+) = phosphonoacetaldehyde + NADH + H(+). Its pathway is secondary metabolite biosynthesis; bialaphos biosynthesis. Functionally, catalyzes the reduction of phosphonoacetaldehyde to 2-hydroxyethylphosphonate, a step in the biosynthesis of phosphinothricin tripeptide. Phosphinothricin tripeptide (PTT), also known as bialaphos (BA), is a natural-product antibiotic and potent herbicide. Can use both NAD and NADP but the preferred substrate is NAD. The protein is Phosphonoacetaldehyde reductase (phpC) of Streptomyces viridochromogenes (strain DSM 40736 / JCM 4977 / BCRC 1201 / Tue 494).